The chain runs to 335 residues: Foldase protein PrsA (335 aa).

An N-terminal signal peptide occupies residues 1 to 22 (MRSAKKLLSVLCLGVFILTFTA). A lipid anchor (N-palmitoyl cysteine) is attached at Cys-23. Residue Cys-23 is the site of S-diacylglycerol cysteine attachment. The PpiC domain maps to 194–285 (PNTMNVSHIL…FGYHIIKINS (92 aa)).

It belongs to the PrsA family.

It is found in the cell membrane. It catalyses the reaction [protein]-peptidylproline (omega=180) = [protein]-peptidylproline (omega=0). In terms of biological role, plays a major role in protein secretion by helping the post-translocational extracellular folding of several secreted proteins. This chain is Foldase protein PrsA, found in Clostridium botulinum (strain Loch Maree / Type A3).